The primary structure comprises 456 residues: 5-hydroxytryptamine receptor 3E (456 aa).

The N-terminal stretch at 1 to 25 is a signal peptide; it reads MEGSWFHRKRFSFYLLLGFLLQGRG. Topologically, residues 26-248 are extracellular; it reads VTFTINCSGF…FYVAIRRRPS (223 aa). Cysteines 162 and 176 form a disulfide. Residue Asn-175 is glycosylated (N-linked (GlcNAc...) asparagine). A helical membrane pass occupies residues 249-269; that stretch reads LYVINLLVPSGFLVAIDALSF. The Cytoplasmic segment spans residues 270–282; it reads YLPVKSGNRVPFK. A helical membrane pass occupies residues 283-303; it reads ITLLLGYNVFLLMMSDLLPTS. Residues 304-307 are Extracellular-facing; the sequence is GTPL. The chain crosses the membrane as a helical span at residues 308–328; the sequence is IGVYFALCLSLMVGSLLETIF. Residues 329–433 are Cytoplasmic-facing; sequence ITHLLHVATT…WLQFSHAMDA (105 aa). The segment at 401 to 432 is HA-stretch; determines single-channel conductance in 5-HT3 receptors; that stretch reads TGGSEWTRAQREHEAQKQHSVELWLQFSHAMD. A helical membrane pass occupies residues 434-454; sequence MLFRLYLLFMASSIITVICLW. Residues 455 to 456 are Extracellular-facing; sequence NT.

It belongs to the ligand-gated ion channel (TC 1.A.9) family. 5-hydroxytryptamine receptor (TC 1.A.9.2) subfamily. HTR3E sub-subfamily. In terms of assembly, forms homopentameric as well as heteropentameric serotonin-activated cation-selective channel complexes with HTR3A. The homomeric complex is not functional. Heteropentameric complexes display properties which resemble that of neuronal serotonin-activated channels in vivo. Expressed in adult colon and intestine.

The protein resides in the postsynaptic cell membrane. The protein localises to the cell membrane. It catalyses the reaction Na(+)(in) = Na(+)(out). The enzyme catalyses K(+)(in) = K(+)(out). It carries out the reaction Ca(2+)(in) = Ca(2+)(out). Functionally, forms serotonin (5-hydroxytryptamine/5-HT3)-activated cation-selective channel complexes, which when activated cause fast, depolarizing responses in neurons. The chain is 5-hydroxytryptamine receptor 3E from Homo sapiens (Human).